A 253-amino-acid chain; its full sequence is 3-deoxy-manno-octulosonate cytidylyltransferase (253 aa).

Belongs to the KdsB family.

It localises to the cytoplasm. The enzyme catalyses 3-deoxy-alpha-D-manno-oct-2-ulosonate + CTP = CMP-3-deoxy-beta-D-manno-octulosonate + diphosphate. It functions in the pathway nucleotide-sugar biosynthesis; CMP-3-deoxy-D-manno-octulosonate biosynthesis; CMP-3-deoxy-D-manno-octulosonate from 3-deoxy-D-manno-octulosonate and CTP: step 1/1. Its pathway is bacterial outer membrane biogenesis; lipopolysaccharide biosynthesis. Functionally, activates KDO (a required 8-carbon sugar) for incorporation into bacterial lipopolysaccharide in Gram-negative bacteria. This chain is 3-deoxy-manno-octulosonate cytidylyltransferase, found in Haemophilus ducreyi (strain 35000HP / ATCC 700724).